The chain runs to 358 residues: 3-dehydroquinate synthase (358 aa).

NAD(+) contacts are provided by residues 105–109, 129–130, lysine 142, lysine 151, and 169–172; these read GVVGD, TT, and TLKT. 3 residues coordinate Zn(2+): glutamate 184, histidine 245, and histidine 262.

It belongs to the sugar phosphate cyclases superfamily. Dehydroquinate synthase family. Requires NAD(+) as cofactor. The cofactor is Co(2+). Zn(2+) is required as a cofactor.

The protein resides in the cytoplasm. It carries out the reaction 7-phospho-2-dehydro-3-deoxy-D-arabino-heptonate = 3-dehydroquinate + phosphate. It functions in the pathway metabolic intermediate biosynthesis; chorismate biosynthesis; chorismate from D-erythrose 4-phosphate and phosphoenolpyruvate: step 2/7. Its function is as follows. Catalyzes the conversion of 3-deoxy-D-arabino-heptulosonate 7-phosphate (DAHP) to dehydroquinate (DHQ). This is 3-dehydroquinate synthase from Enterococcus faecalis (strain ATCC 700802 / V583).